A 507-amino-acid chain; its full sequence is 3-[(3aS,4S,7aS)-7a-methyl-1,5-dioxo-octahydro-1H-inden-4-yl]propanoyl:CoA ligase (507 aa).

ATP is bound by residues 177–185 (TSGTTGRSK), Asp-391, Arg-406, and Lys-497.

The protein belongs to the ATP-dependent AMP-binding enzyme family.

It catalyses the reaction 3-[(3aS,4S,7aS)-7a-methyl-1,5-dioxo-octahydro-1H-inden-4-yl]propanoate + ATP + CoA = 3-[(3aS,4S,7aS)-7a-methyl-1,5-dioxo-octahydro-1H-inden-4-yl]propanoyl-CoA + AMP + diphosphate. The enzyme catalyses 5-hydroxy-3-[(3aS,4S,5R,7aS)-7a-methyl-1,5-dioxo-octahydro-1H-inden-4-yl]propanoate + ATP + CoA = 3-[(3aS,4S,5R,7aS)-5-hydroxy-7a-methyl-1-oxo-octahydro-1H-inden-4-yl]propanoyl-CoA + AMP + diphosphate. Its function is as follows. Involved in the catabolism of the rings C and D of cholesterol. Catalyzes the ATP-dependent CoA thioesterification of 3aalpha-H-4alpha(3'-propanoate)-7abeta-methylhexahydro-1,5-indanedione (HIP) to yield HIP-CoA. It can also use the hydroxylated analogs of HIP, 5alpha-OH HIP and 1beta-OH HIP. It requires that the side chain at C17 is completely removed. The sequence is that of 3-[(3aS,4S,7aS)-7a-methyl-1,5-dioxo-octahydro-1H-inden-4-yl]propanoyl:CoA ligase from Mycobacterium tuberculosis (strain ATCC 25618 / H37Rv).